The primary structure comprises 266 residues: Putative carbamate hydrolase RutD (266 aa).

Residues 14-115 form the AB hydrolase-1 domain; that stretch reads PVVVLISGLG…TMLVSVNGWL (102 aa).

It belongs to the AB hydrolase superfamily. Hydrolase RutD family.

The catalysed reaction is carbamate + 2 H(+) = NH4(+) + CO2. Involved in pyrimidine catabolism. May facilitate the hydrolysis of carbamate, a reaction that can also occur spontaneously. The chain is Putative carbamate hydrolase RutD from Shigella flexneri serotype 5b (strain 8401).